A 133-amino-acid chain; its full sequence is Alcohol dehydrogenase, 15 kDa subunit (133 aa).

An N-terminal signal peptide occupies residues 1–24 (MFRRIVPVLGLALGLGLASQAAMA). A disordered region spans residues 23–43 (MAQEQSPPPPPAVQGTPGKDF). Pyrrolidone carboxylic acid is present on Gln25.

The alcohol dehydrogenase multicomponent enzyme system is composed of a dehydrogenase subunit I (AdhA), a cytochrome c subunit II (AdhB) and a subunit III (AdhS).

The protein resides in the cell membrane. Functionally, part of the alcohol dehydrogenase multicomponent enzyme system which is involved in the production of acetic acid and in the ethanol oxidase respiratory chain. Does not play an obligatory role for the alcohol dehydrogenase (ADH) activity. The sequence is that of Alcohol dehydrogenase, 15 kDa subunit from Gluconobacter oxydans (strain 621H) (Gluconobacter suboxydans).